The sequence spans 308 residues: Probable manganese-dependent inorganic pyrophosphatase (308 aa).

6 residues coordinate Mn(2+): H9, D13, D15, D75, H97, and D149.

The protein belongs to the PPase class C family. Mn(2+) is required as a cofactor.

The protein resides in the cytoplasm. It catalyses the reaction diphosphate + H2O = 2 phosphate + H(+). The chain is Probable manganese-dependent inorganic pyrophosphatase from Listeria welshimeri serovar 6b (strain ATCC 35897 / DSM 20650 / CCUG 15529 / CIP 8149 / NCTC 11857 / SLCC 5334 / V8).